A 71-amino-acid polypeptide reads, in one-letter code: DNA-directed RNA polymerase subunit epsilon (71 aa).

This sequence belongs to the RNA polymerase subunit epsilon family. As to quaternary structure, RNAP is composed of a core of 2 alpha, a beta and a beta' subunit. The core is associated with a delta subunit, and at least one of epsilon or omega. When a sigma factor is associated with the core the holoenzyme is formed, which can initiate transcription.

The enzyme catalyses RNA(n) + a ribonucleoside 5'-triphosphate = RNA(n+1) + diphosphate. In terms of biological role, a non-essential component of RNA polymerase (RNAP). The chain is DNA-directed RNA polymerase subunit epsilon from Staphylococcus carnosus (strain TM300).